A 434-amino-acid polypeptide reads, in one-letter code: Glutamate-1-semialdehyde 2,1-aminomutase 1 (434 aa).

N6-(pyridoxal phosphate)lysine is present on Lys-270.

It belongs to the class-III pyridoxal-phosphate-dependent aminotransferase family. HemL subfamily. As to quaternary structure, homodimer. Pyridoxal 5'-phosphate is required as a cofactor.

Its subcellular location is the cytoplasm. It catalyses the reaction (S)-4-amino-5-oxopentanoate = 5-aminolevulinate. It functions in the pathway porphyrin-containing compound metabolism; protoporphyrin-IX biosynthesis; 5-aminolevulinate from L-glutamyl-tRNA(Glu): step 2/2. The chain is Glutamate-1-semialdehyde 2,1-aminomutase 1 from Bacillus cereus (strain AH187).